Reading from the N-terminus, the 634-residue chain is Ankyrin repeat and SOCS box protein 2 (634 aa).

Residues 26–45 (SEEELVQMAIEQSLADKTRG) enclose the UIM domain. The tract at residues 35–81 (IEQSLADKTRGPTPAETSVSSQTNHQPGHIHPWTRSSSPPESPPARA) is disordered. Residues 49–60 (AETSVSSQTNHQ) show a composition bias toward polar residues. 12 ANK repeats span residues 104–133 (AAMD…NLAE), 137–167 (EGWL…TIDQ), 171–200 (QEET…EPDI), 204–233 (SRET…DANH), 237–266 (RGWT…KVEA), 270–299 (YSIT…DINT), 303–332 (DSAS…DANK), 336–365 (DGLL…RTRV), 368–397 (SGIS…DVNT), 410–439 (RRTS…DPNR), 440–469 (DVIS…NIDA), and 476–504 (TAFP…DGEP). S371 carries the post-translational modification Phosphoserine. An SOCS box domain is found at 580-634 (EDWAVIKEKAEPPRPLAHLCRLRVRKAIGKYRIKLLDTLPLPGRLIRYLKYENTQ).

It belongs to the ankyrin SOCS box (ASB) family. Component of a probable ECS E3 ubiquitin-protein ligase complex which contains CUL5, either RBX1 or RNF7/RBX2, Elongin BC complex (ELOB and ELOC) and ASB2. Interacts with SKP2. Through its interaction with SKP2, likely to bridge the formation of dimeric E3-ubiquitin-protein ligase complexes composed of an ECS complex and an SCF(SKP2) complex. Interacts with JAK2; the interaction targets JAK2 for Notch-mediated proteasomal degradation. Interacts with TCF3/E2A; the interaction is mediated by SKP2 and targets TCF3 for Notch-mediated proteasomal degradation. Interacts with DES. Post-translationally, monoubiquitinated.

It is found in the cytoplasm. It localises to the cytoskeleton. The protein localises to the stress fiber. The protein resides in the myofibril. Its subcellular location is the sarcomere. It is found in the z line. Its pathway is protein modification; protein ubiquitination. Its function is as follows. Substrate-recognition component of a SCF-like ECS (Elongin-Cullin-SOCS-box protein) E3 ubiquitin-protein ligase complex which mediates the ubiquitination and subsequent proteasomal degradation of target proteins. Mediates Notch-induced ubiquitination and degradation of substrates including E2A and JAK2. Required during embryonic heart development for complete heart looping. Required for cardiomyocyte differentiation. Involved in myogenic differentiation and targets filamin FLNB for proteasomal degradation but not filamin FLNA. Also targets DES for proteasomal degradation. Acts as a negative regulator of skeletal muscle mass. The polypeptide is Ankyrin repeat and SOCS box protein 2 (Rattus norvegicus (Rat)).